A 335-amino-acid polypeptide reads, in one-letter code: Tetraacyldisaccharide 4'-kinase (335 aa).

51–58 (HVGGAGKT) contributes to the ATP binding site.

This sequence belongs to the LpxK family.

The enzyme catalyses a lipid A disaccharide + ATP = a lipid IVA + ADP + H(+). It participates in glycolipid biosynthesis; lipid IV(A) biosynthesis; lipid IV(A) from (3R)-3-hydroxytetradecanoyl-[acyl-carrier-protein] and UDP-N-acetyl-alpha-D-glucosamine: step 6/6. In terms of biological role, transfers the gamma-phosphate of ATP to the 4'-position of a tetraacyldisaccharide 1-phosphate intermediate (termed DS-1-P) to form tetraacyldisaccharide 1,4'-bis-phosphate (lipid IVA). This Nitrobacter hamburgensis (strain DSM 10229 / NCIMB 13809 / X14) protein is Tetraacyldisaccharide 4'-kinase.